A 183-amino-acid polypeptide reads, in one-letter code: Small ribosomal subunit protein uS4c (183 aa).

The 62-residue stretch at 82-143 folds into the S4 RNA-binding domain; that stretch reads MRLDNILFRL…KQRSKALIQN (62 aa).

Belongs to the universal ribosomal protein uS4 family. Part of the 30S ribosomal subunit. Contacts protein S5. The interaction surface between S4 and S5 is involved in control of translational fidelity.

It localises to the plastid. Its subcellular location is the chloroplast. One of the primary rRNA binding proteins, it binds directly to 16S rRNA where it nucleates assembly of the body of the 30S subunit. Its function is as follows. With S5 and S12 plays an important role in translational accuracy. This is Small ribosomal subunit protein uS4c (rps4) from Freesia sp. (strain Lejeune 1997).